The following is a 251-amino-acid chain: CDP-diacylglycerol pyrophosphatase (251 aa).

Residues 5-25 (GYFLLAVIVIVAAAGVGYWKF) form a helical membrane-spanning segment.

Belongs to the Cdh family.

The protein localises to the cell inner membrane. The catalysed reaction is a CDP-1,2-diacyl-sn-glycerol + H2O = a 1,2-diacyl-sn-glycero-3-phosphate + CMP + 2 H(+). Its pathway is phospholipid metabolism; CDP-diacylglycerol degradation; phosphatidate from CDP-diacylglycerol: step 1/1. The protein is CDP-diacylglycerol pyrophosphatase of Salmonella paratyphi A (strain ATCC 9150 / SARB42).